Consider the following 497-residue polypeptide: Serine hydroxymethyltransferase (497 aa).

Residues Leu-176 and 180–182 (GHL) each bind (6S)-5,6,7,8-tetrahydrofolate. Position 289 is an N6-(pyridoxal phosphate)lysine (Lys-289). Glu-306 is a (6S)-5,6,7,8-tetrahydrofolate binding site.

This sequence belongs to the SHMT family. As to quaternary structure, homodimer. It depends on pyridoxal 5'-phosphate as a cofactor.

The protein resides in the cytoplasm. It catalyses the reaction (6R)-5,10-methylene-5,6,7,8-tetrahydrofolate + glycine + H2O = (6S)-5,6,7,8-tetrahydrofolate + L-serine. Its pathway is one-carbon metabolism; tetrahydrofolate interconversion. It functions in the pathway amino-acid biosynthesis; glycine biosynthesis; glycine from L-serine: step 1/1. Its function is as follows. Catalyzes the reversible interconversion of serine and glycine with tetrahydrofolate (THF) serving as the one-carbon carrier. This reaction serves as the major source of one-carbon groups required for the biosynthesis of purines, thymidylate, methionine, and other important biomolecules. Also exhibits THF-independent aldolase activity toward beta-hydroxyamino acids, producing glycine and aldehydes, via a retro-aldol mechanism. This is Serine hydroxymethyltransferase from Chlamydia pneumoniae (Chlamydophila pneumoniae).